Here is a 176-residue protein sequence, read N- to C-terminus: Flavodoxin 1 (176 aa).

One can recognise a Flavodoxin-like domain in the interval 4–165; it reads HGIFFGSDTG…RVEKWVKQIS (162 aa).

Belongs to the flavodoxin family. The cofactor is FMN.

Functionally, low-potential electron donor to a number of redox enzymes. This chain is Flavodoxin 1 (fldA), found in Shigella flexneri.